The following is a 289-amino-acid chain: ATP synthase mitochondrial F1 complex assembly factor 2 (289 aa).

Residues 1–40 (MWRSCLRLRDGGRRLLNRPAGGPSASMSPGPTIPSPARAY) constitute a mitochondrion transit peptide. The segment at 13–40 (RRLLNRPAGGPSASMSPGPTIPSPARAY) is disordered. N6-succinyllysine is present on Lys133.

The protein belongs to the ATP12 family. Interacts with ATP5F1B; involved in the assembly of the F1 component of the mitochondrial ATP synthase (ATPase). Interacts with FMC1. As to expression, widely expressed.

Its subcellular location is the mitochondrion inner membrane. In terms of biological role, plays a role in the assembly of the F1 component of the mitochondrial ATP synthase (ATPase). The protein is ATP synthase mitochondrial F1 complex assembly factor 2 of Homo sapiens (Human).